The primary structure comprises 352 residues: Nicotinate-nucleotide--dimethylbenzimidazole phosphoribosyltransferase (352 aa).

The active-site Proton acceptor is the Glu316.

It belongs to the CobT family.

The enzyme catalyses 5,6-dimethylbenzimidazole + nicotinate beta-D-ribonucleotide = alpha-ribazole 5'-phosphate + nicotinate + H(+). It participates in nucleoside biosynthesis; alpha-ribazole biosynthesis; alpha-ribazole from 5,6-dimethylbenzimidazole: step 1/2. Its function is as follows. Catalyzes the synthesis of alpha-ribazole-5'-phosphate from nicotinate mononucleotide (NAMN) and 5,6-dimethylbenzimidazole (DMB). This Yersinia enterocolitica serotype O:8 / biotype 1B (strain NCTC 13174 / 8081) protein is Nicotinate-nucleotide--dimethylbenzimidazole phosphoribosyltransferase.